Reading from the N-terminus, the 198-residue chain is Na(+)-translocating NADH-quinone reductase subunit E (198 aa).

6 consecutive transmembrane segments (helical) span residues 11–31 (AVFV…FLAV), 35–55 (VSTA…SVPV), 77–97 (FLNF…LEMI), 110–130 (GIFL…SFMV), 140–160 (VVYG…MAGI), and 176–196 (LGIT…FSGV).

The protein belongs to the NqrDE/RnfAE family. Composed of six subunits; NqrA, NqrB, NqrC, NqrD, NqrE and NqrF.

It localises to the cell inner membrane. The enzyme catalyses a ubiquinone + n Na(+)(in) + NADH + H(+) = a ubiquinol + n Na(+)(out) + NAD(+). NQR complex catalyzes the reduction of ubiquinone-1 to ubiquinol by two successive reactions, coupled with the transport of Na(+) ions from the cytoplasm to the periplasm. NqrA to NqrE are probably involved in the second step, the conversion of ubisemiquinone to ubiquinol. In Serratia proteamaculans (strain 568), this protein is Na(+)-translocating NADH-quinone reductase subunit E.